Here is a 242-residue protein sequence, read N- to C-terminus: Intraflagellar transport-associated protein (242 aa).

Ser-57 carries the phosphoserine modification.

Interacts with IFT122; the interaction associates IFTAP with IFT-A complex.

Functionally, seems to play a role in ciliary BBSome localization, maybe through interaction with IFT-A complex. This chain is Intraflagellar transport-associated protein (IFTAP), found in Bos taurus (Bovine).